A 1102-amino-acid polypeptide reads, in one-letter code: ATP-dependent DNA helicase MPH1 (1102 aa).

The tract at residues 19–55 (ALDKPATSGLHSREQEQQRDISNATPHTSTDLELEDF) is disordered. The span at 38 to 49 (DISNATPHTSTD) shows a compositional bias: polar residues. The Helicase ATP-binding domain maps to 147–315 (IVKNGLFNNT…DVIDNLGVSH (169 aa)). Residue 160–167 (LPTGLGKT) participates in ATP binding. The short motif at 263 to 266 (DEAH) is the DEAH box element. The region spanning 490-651 (NLLNYFMDAG…GSRFNFRHDL (162 aa)) is the Helicase C-terminal domain. Disordered stretches follow at residues 672–702 (PIEN…FNMP), 720–743 (ASKT…DEIS), 818–837 (SQGI…KSRY), and 858–1102 (SGRK…SESG). Residues 687 to 699 (RSTRGKKASKKKF) show a composition bias toward basic residues. A compositionally biased stretch (basic and acidic residues) spans 822-837 (ETRHTKPHGDTDKSRY). Over residues 1003-1019 (SSGAASKSGSTASTAAK) the composition is skewed to low complexity. The segment covering 1069-1082 (SDDDDDDNDDEDDV) has biased composition (acidic residues).

Belongs to the DEAD box helicase family. DEAH subfamily. FANCM sub-subfamily. Interacts with the MHF histone-fold complex to form the FANCM-MHF complex.

Its subcellular location is the nucleus. The catalysed reaction is ATP + H2O = ADP + phosphate + H(+). Functionally, ATP-dependent DNA helicase involved in DNA damage repair by homologous recombination and in genome maintenance. Capable of unwinding D-loops. Plays a role in limiting crossover recombinants during mitotic DNA double-strand break (DSB) repair. Component of a FANCM-MHF complex which promotes gene conversion at blocked replication forks, probably by reversal of the stalled fork. The chain is ATP-dependent DNA helicase MPH1 from Pyricularia oryzae (strain 70-15 / ATCC MYA-4617 / FGSC 8958) (Rice blast fungus).